Reading from the N-terminus, the 543-residue chain is Chaperonin GroEL 1 (543 aa).

ATP is bound by residues 29–32, 86–90, glycine 413, 479–481, and aspartate 495; these read TLGP, DGTTT, and NAA.

It belongs to the chaperonin (HSP60) family. As to quaternary structure, forms a cylinder of 14 subunits composed of two heptameric rings stacked back-to-back. Interacts with the co-chaperonin GroES.

The protein resides in the cytoplasm. The enzyme catalyses ATP + H2O + a folded polypeptide = ADP + phosphate + an unfolded polypeptide.. In terms of biological role, together with its co-chaperonin GroES, plays an essential role in assisting protein folding. The GroEL-GroES system forms a nano-cage that allows encapsulation of the non-native substrate proteins and provides a physical environment optimized to promote and accelerate protein folding. In Prochlorococcus marinus (strain NATL2A), this protein is Chaperonin GroEL 1.